Reading from the N-terminus, the 443-residue chain is 26S proteasome regulatory subunit 4 homolog B (443 aa).

Disordered regions lie at residues 1 to 55 (MGQG…LPTV) and 87 to 108 (RLKPQEEKAEEDRSKVDDLRGT). Basic and acidic residues-rich tracts occupy residues 12–28 (QGDRKPDGGEKKEKKFE) and 87–106 (RLKPQEEKAEEDRSKVDDLR). 229-236 (GEPGTGKT) serves as a coordination point for ATP. Glycyl lysine isopeptide (Lys-Gly) (interchain with G-Cter in ubiquitin) cross-links involve residues Lys-296 and Lys-433.

This sequence belongs to the AAA ATPase family. As to quaternary structure, component of the 19S regulatory particle (RP/PA700) base subcomplex of the 26S proteasome. The 26S proteasome is composed of a core protease (CP), known as the 20S proteasome, capped at one or both ends by the 19S regulatory particle (RP/PA700). The RP/PA700 complex is composed of at least 17 different subunits in two subcomplexes, the base and the lid, which form the portions proximal and distal to the 20S proteolytic core, respectively. Preferentially expressed in the root and shoot apical meristem.

The protein resides in the cytoplasm. It is found in the nucleus. Functionally, the 26S protease is involved in the ATP-dependent degradation of ubiquitinated proteins. The regulatory (or ATPase) complex confers ATP dependency and substrate specificity to the 26S complex. Acts redundantly with RPT2A in the regulation of gametogenesis. With RPT2A plays a critical role in 26S proteasome assembly. The protein is 26S proteasome regulatory subunit 4 homolog B of Arabidopsis thaliana (Mouse-ear cress).